The following is a 97-amino-acid chain: Co-chaperonin GroES (97 aa).

The protein belongs to the GroES chaperonin family. In terms of assembly, heptamer of 7 subunits arranged in a ring. Interacts with the chaperonin GroEL.

Its subcellular location is the cytoplasm. In terms of biological role, together with the chaperonin GroEL, plays an essential role in assisting protein folding. The GroEL-GroES system forms a nano-cage that allows encapsulation of the non-native substrate proteins and provides a physical environment optimized to promote and accelerate protein folding. GroES binds to the apical surface of the GroEL ring, thereby capping the opening of the GroEL channel. The sequence is that of Co-chaperonin GroES from Buchnera aphidicola subsp. Thelaxes suberi.